Here is a 292-residue protein sequence, read N- to C-terminus: Aquaporin-3 (292 aa).

Residues 1–24 (MGRQKELMNRCGEMLHIRYRLLRQ) are Cytoplasmic-facing. The chain crosses the membrane as a helical span at residues 25–42 (ALAECLGTLILVMFGCGS). Residues 43 to 56 (VAQVVLSRGTHGGF) are Extracellular-facing. Residues 57–74 (LTINLAFGFAVTLGILVA) traverse the membrane as a helical segment. The Cytoplasmic portion of the chain corresponds to 75-78 (GQVS). Positions 79–92 (GAHLNPAVTFAMCF) form an intramembrane region, discontinuously helical. The NPA 1 motif lies at 83-85 (NPA). Over 93–100 (LAREPWIK) the chain is Cytoplasmic. A helical transmembrane segment spans residues 101-121 (LPIYALAQTLGAFLGAGIVFG). The Extracellular segment spans residues 122–159 (LYYDAIWAFANNELFVSGPNGTAGIFATYPSGHLDMVN). N-linked (GlcNAc...) asparagine glycosylation occurs at Asn-141. A helical transmembrane segment spans residues 160–177 (GFFDQFIGTAALIVCVLA). The Cytoplasmic portion of the chain corresponds to 178–189 (IVDPYNNPVPRG). Residues 190-206 (LEAFTVGLVVLVIGTSM) traverse the membrane as a helical segment. Over 207–210 (GFNS) the chain is Extracellular. Positions 211–224 (GYAVNPARDFGPRL) form an intramembrane region, discontinuously helical. An NPA 2 motif is present at residues 215 to 217 (NPA). The Extracellular segment spans residues 225-242 (FTALAGWGSEVFTTGRHW). A helical membrane pass occupies residues 243-264 (WWVPIVSPLLGSIAGVFVYQLM). The Cytoplasmic segment spans residues 265–292 (IGCHLEQPPPSTEEENVKLAHMKHKEQI).

Belongs to the MIP/aquaporin (TC 1.A.8) family. As to quaternary structure, homotetramer; each monomer provides an independent glycerol/water pore. Could also exist in other oligomeric states. Detected in principal cells in collecting ducts in kidney medulla (at protein level). Renal medulla and colon. Predominantly in the inner medulla. Expressed in basal layer of epidermal keratinocytes.

The protein resides in the cell membrane. It is found in the basolateral cell membrane. It catalyses the reaction glycerol(in) = glycerol(out). The enzyme catalyses H2O(in) = H2O(out). It carries out the reaction urea(in) = urea(out). The catalysed reaction is H2O2(out) = H2O2(in). Its function is as follows. Aquaglyceroporins form homotetrameric transmembrane channels, with each monomer independently mediating glycerol and water transport across the plasma membrane along their osmotic gradient. Could also be permeable to urea. Also participates in cell permeability to H2O2 and H2O2-mediated signaling. In skin, transports glycerol to the epidermis and stratum corneum, where it maintains hydration, elasticity, and supports lipid biosynthesis for barrier repair. In kidney, contributes to the reabsorption of water, helping the body maintain proper fluid balance. In Mus musculus (Mouse), this protein is Aquaporin-3.